A 522-amino-acid polypeptide reads, in one-letter code: MAFLDNPTIILAHIRQSHVTSDDTGMCEMVLIDHDVDLEKFNPSSTYGDSASETQGSNGETQGYVYSQSVDITSSWDFGIRRRSNTAQRLERLRKERQNQIKCKNVQWKDRNTSYSAEELSSLFEKKNFRVRSPCSGKQSILSVRLEQCPLQLNNPFNEYSKFDGKGHVGTTATKKIDVYLPLHANQDKLQPMTVVTIANAKVHDLIGLICWQYTSEGREPKLNDNVSAYCLHIAEDDGEVDTDFPPLDSNEPIHKFGFSTLALVEKYSSPGLAAKQSLFVRINAAHGFSLIQVDSMKVTMKDILQKALKRRKGSQRGSGPQYRLEKQSEPNVPVDLDCTLESQSTLEFCLVRENSSRGEEISEEDPQIDIATVQDMLSSHHYKSFKVSMIHRLRFTTDVQLGISGDKVEIDPVTNQKASTKFWIKQKPISIDSELLCACDLVEEKSPSHAIFKLTYLSNHDYKHLYFESDAATVNEIVLKVNYILESRASTARAEYFAQKQRKLNRRTSFSFQKEKKSGQQ.

Residues 43-62 (PSSTYGDSASETQGSNGETQ) form a disordered region. Positions 139 to 267 (QSILSVRLEQ…GFSTLALVEK (129 aa)) constitute a CRIM domain. Positions 279–353 (LFVRINAAHG…QSTLEFCLVR (75 aa)) are SIN1-type RBD. Residues 310 to 330 (KRRKGSQRGSGPQYRLEKQSE) are disordered. The region spanning 382–487 (HYKSFKVSMI…IVLKVNYILE (106 aa)) is the SIN1-type PH domain. A 1,2-diacyl-sn-glycero-3-phospho-(1D-myo-inositol-3,4,5-trisphosphate)-binding residues include Arg393, Lys428, and Lys464.

The protein belongs to the SIN1 family. As to quaternary structure, component of the mechanistic target of rapamycin complex 2 (mTORC2), consisting in two heterotretramers composed of MTOR, MLST8, RICTOR and MAPKAP1/SIN1. Contrary to mTORC1, mTORC2 does not bind to and is not sensitive to FKBP12-rapamycin.

It is found in the cell membrane. It localises to the endoplasmic reticulum membrane. Its subcellular location is the early endosome membrane. The protein localises to the late endosome membrane. The protein resides in the lysosome membrane. It is found in the golgi apparatus membrane. It localises to the mitochondrion outer membrane. Its subcellular location is the cytoplasm. The protein localises to the perinuclear region. The protein resides in the nucleus. Its activity is regulated as follows. Phosphatidylinositol 3,4,5-trisphosphate (PI(3,4,5)P3) promotes MTOR activation by relieving MAPKAP1/SIN1-mediated inhibition of MTOR that takes place in absence of PI(3,4,5)P3. Component of the mechanistic target of rapamycin complex 2 (mTORC2), which transduces signals from growth factors to pathways involved in proliferation, cytoskeletal organization, lipogenesis and anabolic output. In response to growth factors, mTORC2 phosphorylates and activates AGC protein kinase family members, including AKT (AKT1, AKT2 and AKT3), PKC (PRKCA, PRKCB and PRKCE) and SGK1. In contrast to mTORC1, mTORC2 is nutrient-insensitive. Within the mTORC2 complex, MAPKAP1/SIN1 acts as a substrate adapter which recognizes and binds AGC protein kinase family members for phosphorylation by MTOR. The polypeptide is Target of rapamycin complex 2 subunit MAPKAP1 (MAPKAP1) (Gallus gallus (Chicken)).